The chain runs to 350 residues: Mitochondrial glycine transporter (350 aa).

3 Solcar repeats span residues S23 to C107, L134 to N218, and S250 to K334. 6 consecutive transmembrane segments (helical) span residues F29–Q54, G82–I108, L140–E165, G193–K216, V254–L280, and G309–V327.

The protein belongs to the mitochondrial carrier (TC 2.A.29) family. SLC25A38 subfamily.

It is found in the mitochondrion inner membrane. The enzyme catalyses glycine(in) = glycine(out). Its function is as follows. Mitochondrial glycine transporter that imports glycine into the mitochondrial matrix. Plays an important role in providing glycine for the first enzymatic step in heme biosynthesis, the condensation of glycine with succinyl-CoA to produce 5-aminolevulinate (ALA) in the mitochondrial matrix. The protein is Mitochondrial glycine transporter of Ajellomyces capsulatus (strain NAm1 / WU24) (Darling's disease fungus).